The sequence spans 123 residues: Holo-[acyl-carrier-protein] synthase (123 aa).

Positions 8 and 55 each coordinate Mg(2+).

The protein belongs to the P-Pant transferase superfamily. AcpS family. Requires Mg(2+) as cofactor.

Its subcellular location is the cytoplasm. It carries out the reaction apo-[ACP] + CoA = holo-[ACP] + adenosine 3',5'-bisphosphate + H(+). Its function is as follows. Transfers the 4'-phosphopantetheine moiety from coenzyme A to a Ser of acyl-carrier-protein. In Caldicellulosiruptor saccharolyticus (strain ATCC 43494 / DSM 8903 / Tp8T 6331), this protein is Holo-[acyl-carrier-protein] synthase.